Here is a 347-residue protein sequence, read N- to C-terminus: NADH-ubiquinone oxidoreductase chain 2 (347 aa).

11 consecutive transmembrane segments (helical) span residues 1–21 (MNPM…SIVM), 25–45 (HWFL…PVLM), 60–80 (FLTQ…NLMF), 96–116 (MLLT…FWVP), 127–147 (GLIL…QIYP), 149–169 (INTN…GWGG), 178–198 (IMAY…IYNP), 202–222 (LLNL…LIFA), 239–259 (IITI…PLTG), 274–294 (NSVI…FFYM), and 326–346 (MMPL…FILL).

It belongs to the complex I subunit 2 family. Core subunit of respiratory chain NADH dehydrogenase (Complex I) which is composed of 45 different subunits. Interacts with TMEM242.

It localises to the mitochondrion inner membrane. The enzyme catalyses a ubiquinone + NADH + 5 H(+)(in) = a ubiquinol + NAD(+) + 4 H(+)(out). Its function is as follows. Core subunit of the mitochondrial membrane respiratory chain NADH dehydrogenase (Complex I) that is believed to belong to the minimal assembly required for catalysis. Complex I functions in the transfer of electrons from NADH to the respiratory chain. The immediate electron acceptor for the enzyme is believed to be ubiquinone. The polypeptide is NADH-ubiquinone oxidoreductase chain 2 (Suncus etruscus (Etruscan shrew)).